Here is a 195-residue protein sequence, read N- to C-terminus: 3-isopropylmalate dehydratase small subunit (195 aa).

The protein belongs to the LeuD family. LeuD type 1 subfamily. Heterodimer of LeuC and LeuD.

The enzyme catalyses (2R,3S)-3-isopropylmalate = (2S)-2-isopropylmalate. It participates in amino-acid biosynthesis; L-leucine biosynthesis; L-leucine from 3-methyl-2-oxobutanoate: step 2/4. Its function is as follows. Catalyzes the isomerization between 2-isopropylmalate and 3-isopropylmalate, via the formation of 2-isopropylmaleate. The chain is 3-isopropylmalate dehydratase small subunit from Corynebacterium kroppenstedtii (strain DSM 44385 / JCM 11950 / CIP 105744 / CCUG 35717).